A 508-amino-acid polypeptide reads, in one-letter code: Replication factor C large subunit (508 aa).

43–50 is an ATP binding site; the sequence is GSPGIGKT. The segment at 425 to 508 is disordered; it reads AVEHSGGVFE…DQQSGLSDFM (84 aa). Composition is skewed to acidic residues over residues 443–461 and 483–500; these read GDSD…EESG and TTDD…DDDQ.

This sequence belongs to the activator 1 small subunits family. RfcL subfamily. In terms of assembly, heteromultimer composed of small subunits (RfcS) and large subunits (RfcL).

Its function is as follows. Part of the RFC clamp loader complex which loads the PCNA sliding clamp onto DNA. This is Replication factor C large subunit from Haloarcula marismortui (strain ATCC 43049 / DSM 3752 / JCM 8966 / VKM B-1809) (Halobacterium marismortui).